Here is a 518-residue protein sequence, read N- to C-terminus: Integrator complex subunit 14 (518 aa).

In terms of domain architecture, VWFA spans 2–204 (PTVVVMDVSL…KNVQSMFGKL (203 aa)). The Mg(2+) site is built by serine 10, serine 12, and threonine 86. The disordered stretch occupies residues 373-394 (SDAKENPYGDDDNKSPFPLQPK). Positions 374–386 (DAKENPYGDDDNK) are enriched in basic and acidic residues.

It belongs to the Integrator subunit 14 family. Component of the Integrator complex, composed of core subunits INTS1, INTS2, INTS3, INTS4, INTS5, INTS6, INTS7, INTS8, INTS9/RC74, INTS10, INTS11/CPSF3L, INTS12, INTS13, INTS14 and INTS15. The core complex associates with protein phosphatase 2A subunits PPP2CA and PPP2R1A, to form the Integrator-PP2A (INTAC) complex. INTS14 is part of the tail subcomplex, composed of INTS10, INTS13, INTS14 and INTS15.

Its subcellular location is the nucleus. In terms of biological role, component of the integrator complex, a multiprotein complex that terminates RNA polymerase II (Pol II) transcription in the promoter-proximal region of genes. The integrator complex provides a quality checkpoint during transcription elongation by driving premature transcription termination of transcripts that are unfavorably configured for transcriptional elongation: the complex terminates transcription by (1) catalyzing dephosphorylation of the C-terminal domain (CTD) of Pol II subunit POLR2A/RPB1 and SUPT5H/SPT5, (2) degrading the exiting nascent RNA transcript via endonuclease activity and (3) promoting the release of Pol II from bound DNA. The integrator complex is also involved in terminating the synthesis of non-coding Pol II transcripts, such as enhancer RNAs (eRNAs), small nuclear RNAs (snRNAs), telomerase RNAs and long non-coding RNAs (lncRNAs). Within the integrator complex, INTS14 is part of the integrator tail module that acts as a platform for the recruitment of transcription factors at promoters. The sequence is that of Integrator complex subunit 14 from Gallus gallus (Chicken).